The sequence spans 809 residues: MTLTRREFIKHSGIAAGALVVTSAAPLPAWAEEKGGKILTAGRWGAMNVEVKDGKIVSSTGALAKTIPNSLQSTAADQVHTTARIQHPMVRKSYLDNPLQPAKGRGEDTYVQVSWEQALKLIHEQHERIRKANGPSAIFAGSYGWRSSGVLHKAQTLLQRYMNLAGGYSGHSGDYSTGAAQVIMPHVVGSVEVYEQQTSWPLILENSQVVVLWGMNPLNTLKIAWSSTDEQGLEYFHQLKKSGKPVIAIDPIRSETIEFFGYNATWIAPNMGTDVALMLGIAHTLMTQGKHDKVFLEKYTTGYPQFEEYLTGKSDNTPKSAAWTAEITGVPEAQIVKLAELMAANRTMLMAGWGIQRQQYGEQKHWMLVTLAAMLGQIGTPGGGFGFSYHYSNGGNPTRVGGVLPEMSAAIAGQASEAADDGGMTAIPVARIVDALENPGGKYQHNGKEQTYPNIKMIWWAGGGNFTHHQDTNRLIKAWQKPEMIVVSECYWTAAAKHADIVLPITTSFERNDLTMTGDYSNQHIVPMKQAVAPQFEARNDFDVFAELAELLKPGGKEIYTEGKDEMAWLKFFYDAAQKGARAQRVTMPMFNAFWQQNKLIEMRRSEKNEQYVRYGDFRADPVKNALGTPSGKIEIYSKTLEKFGYKDCPAHPTWLAPDEWKGTADEKQLQLLTAHPAHRLHSQLNYAQLRKKYAVADREPITIHTEDAARFGIANGDLVRVWNKRGQILTGAVVTDGIKKGVVCVHEGAWPDLENGLCKNGSANVLTADIPSSQLANACAGNSALVYIEKYTGNAPKLTAFDQPAVQA.

Residues 1–31 (MTLTRREFIKHSGIAAGALVVTSAAPLPAWA) constitute a signal peptide (tat-type signal). Mo-bis(molybdopterin guanine dinucleotide) is bound at residue serine 176.

This sequence belongs to the prokaryotic molybdopterin-containing oxidoreductase family. It depends on Mo-bis(molybdopterin guanine dinucleotide) as a cofactor. Post-translationally, predicted to be exported by the Tat system. The position of the signal peptide cleavage has not been experimentally proven.

Its subcellular location is the periplasm. The enzyme catalyses trimethylamine + 2 Fe(III)-[cytochrome c] + H2O = trimethylamine N-oxide + 2 Fe(II)-[cytochrome c] + 3 H(+). Its function is as follows. Reduces trimethylamine-N-oxide (TMAO) into trimethylamine; an anaerobic reaction coupled to energy-yielding reactions. Can also reduce other N- and S-oxide compounds such as 4-methylmorpholine-N-oxide and biotin sulfoxide (BSO), but with a lower catalytic efficiency. This chain is Trimethylamine-N-oxide reductase 2 (torZ), found in Escherichia coli O157:H7.